The sequence spans 366 residues: Probable neutral protease 2 homolog B (366 aa).

Residues methionine 1–glycine 19 form the signal peptide. Residues phenylalanine 20–arginine 189 constitute a propeptide that is removed on maturation. Intrachain disulfides connect cysteine 197/cysteine 267, cysteine 274/cysteine 292, and cysteine 306/cysteine 366. Zn(2+) is bound at residue histidine 317. Glutamate 318 is an active-site residue. Zn(2+) is bound by residues histidine 321 and aspartate 332.

Belongs to the peptidase M35 family. Zn(2+) serves as cofactor.

The protein localises to the secreted. It catalyses the reaction Preferential cleavage of bonds with hydrophobic residues in P1'. Also 3-Asn-|-Gln-4 and 8-Gly-|-Ser-9 bonds in insulin B chain.. Probable secreted metalloprotease that shows high activities on basic nuclear substrates such as histone and protamine. May be involved in virulence. The chain is Probable neutral protease 2 homolog B (NpII-B) from Trichophyton rubrum (Athlete's foot fungus).